The sequence spans 192 residues: Ion-translocating oxidoreductase complex subunit A (192 aa).

The next 6 helical transmembrane spans lie at 5 to 25 (ILLIIGTALINNFVLVKFLGL), 39 to 59 (VGMGLATMFVLTVASLCAYLV), 63 to 83 (ILIPLNATFLRTLVFILVIAV), 102 to 122 (LLGIFLPLITTNCAVLGVALL), 134 to 154 (VVYGFGASLGFSLVLVLFAAL), and 171 to 191 (SIALITAGLMSLAFMGFTGLV).

This sequence belongs to the NqrDE/RnfAE family. As to quaternary structure, the complex is composed of six subunits: RnfA, RnfB, RnfC, RnfD, RnfE and RnfG.

The protein localises to the cell inner membrane. Part of a membrane-bound complex that couples electron transfer with translocation of ions across the membrane. This chain is Ion-translocating oxidoreductase complex subunit A, found in Haemophilus influenzae (strain ATCC 51907 / DSM 11121 / KW20 / Rd).